A 332-amino-acid chain; its full sequence is MIELKGLTKVFRQNGQEIVALSDVNLHVPRGQIFGILGQSGAGKSTLIRCVNLLERPTAGEVWVDGREITRLSPGELRAARREMGMIFQQFNLFDSRTVFGNVAYPLEVAGWPRARIRERVEELLALVGLADKAGAYPNQLSGGQKQRVGIARALAPGPKLLLSDEATSALDPDTTRSVLALLREINRRLGLTILLITHQMEVVKQVCDSVAILEEGKVVEQGGVLELIGRPGSRLRELFYESTEEAAHRIHPDGVRVLLFFVGASADRPLISETVRRFRVDANILQGAVERIAGATVGRLLVEFTGLPEDIQDALRFLEEQGASPEVIPNG.

The 240-residue stretch at 2–241 (IELKGLTKVF…PGSRLRELFY (240 aa)) folds into the ABC transporter domain. Position 38 to 45 (38 to 45 (GQSGAGKS)) interacts with ATP.

This sequence belongs to the ABC transporter superfamily. Methionine importer (TC 3.A.1.24) family. As to quaternary structure, the complex is composed of two ATP-binding proteins (MetN), two transmembrane proteins (MetI) and a solute-binding protein (MetQ).

It localises to the cell membrane. It carries out the reaction L-methionine(out) + ATP + H2O = L-methionine(in) + ADP + phosphate + H(+). The catalysed reaction is D-methionine(out) + ATP + H2O = D-methionine(in) + ADP + phosphate + H(+). Part of the ABC transporter complex MetNIQ involved in methionine import. Responsible for energy coupling to the transport system. The sequence is that of Methionine import ATP-binding protein MetN from Symbiobacterium thermophilum (strain DSM 24528 / JCM 14929 / IAM 14863 / T).